The primary structure comprises 469 residues: Pentatricopeptide repeat-containing protein At2g34370, mitochondrial (469 aa).

A mitochondrion-targeting transit peptide spans 1–65 (MVRLVCSRIL…QNRSFVQCRR (65 aa)). 4 PPR repeats span residues 142 to 172 (DARS…MPKR), 173 to 207 (NSET…GNKP), 208 to 238 (DKEI…MYRD), and 244 to 274 (SMED…MTVE). Positions 375 to 469 (DIGFVPATRV…NGVCSCKDYW (95 aa)) are type DYW motif.

This sequence belongs to the PPR family. PCMP-H subfamily.

Its subcellular location is the mitochondrion. The protein is Pentatricopeptide repeat-containing protein At2g34370, mitochondrial (PCMP-H25) of Arabidopsis thaliana (Mouse-ear cress).